Reading from the N-terminus, the 363-residue chain is 2,5-diketocamphane 1,2-monooxygenase 1 (363 aa).

FMN contacts are provided by residues M74 and 186-194 (TGLTKNSSS).

It belongs to the bacterial luciferase oxidoreductase family. Homodimer. Likely forms a loose transient complex with a P.putida flavin reductase that provides the required FMNH(2) to the enzyme.

The enzyme catalyses (1R,4R)-bornane-2,5-dione + FMNH2 + O2 = (1R,4R)-5-oxo-1,2-campholide + FMN + H2O + H(+). Its pathway is terpene metabolism; (R)-camphor degradation. Its function is as follows. Involved in the degradation and assimilation of (+)-camphor, which allows P.putida strain NCIMB 10007 to grow on this enantiomer of camphor as the sole carbon source. Catalyzes the FMNH(2)-dependent lactonization of 2,5-diketocamphane via a Baeyer-Villiger oxidation to produce the unstable lactone 5-oxo-1,2-campholide with (R,R) configuration, that presumably undergoes spontaneous hydrolysis to form 2-oxo-Delta(3)-4,5,5-trimethylcyclopentenylacetate. Is also able to convert (+)-camphor and norcamphor to the corresponding lactone in vitro. Shows no conversion of (-)-camphor, (+)-fenchone, (-)-fenchone, and (+)-nopinone. Acts only on bicyclic ketones; is not active towards monocyclic ketones, aromatic ketones, the aliphatic 2-decanone, 1-indanone and progesterone. The protein is 2,5-diketocamphane 1,2-monooxygenase 1 of Pseudomonas putida (Arthrobacter siderocapsulatus).